The primary structure comprises 260 residues: Indole-3-glycerol phosphate synthase (260 aa).

It belongs to the TrpC family.

It catalyses the reaction 1-(2-carboxyphenylamino)-1-deoxy-D-ribulose 5-phosphate + H(+) = (1S,2R)-1-C-(indol-3-yl)glycerol 3-phosphate + CO2 + H2O. The protein operates within amino-acid biosynthesis; L-tryptophan biosynthesis; L-tryptophan from chorismate: step 4/5. The chain is Indole-3-glycerol phosphate synthase from Staphylococcus aureus (strain MSSA476).